Consider the following 164-residue polypeptide: Sorting nexin-3 (164 aa).

Positions 40–163 constitute a PX domain; sequence EIEVCNPKTH…VRFIQDPTFQ (124 aa). Residues Arg-83, Ser-85, Lys-114, Arg-120, and Arg-129 each contribute to the a 1,2-diacyl-sn-glycero-3-phospho-(1D-myo-inositol-3-phosphate) site.

The protein belongs to the sorting nexin family.

The protein localises to the cytoplasm. Its subcellular location is the golgi apparatus membrane. The protein resides in the prevacuolar compartment membrane. Required for retention of late Golgi membrane proteins. Component of the retrieval machinery that functions by direct interaction with the cytosolic tails of certain TGN membrane proteins during the sorting/budding process at the prevacuolar compartment. Binds phosphatidylinositol 3-phosphate (PtdIns(P3)). This Kluyveromyces lactis (strain ATCC 8585 / CBS 2359 / DSM 70799 / NBRC 1267 / NRRL Y-1140 / WM37) (Yeast) protein is Sorting nexin-3 (SNX3).